The primary structure comprises 257 residues: 3-methyl-2-oxobutanoate hydroxymethyltransferase (257 aa).

Mg(2+)-binding residues include aspartate 44 and aspartate 83. Residues 44–45 (DS), aspartate 83, and lysine 113 contribute to the 3-methyl-2-oxobutanoate site. Glutamate 115 is a binding site for Mg(2+). Glutamate 182 acts as the Proton acceptor in catalysis.

The protein belongs to the PanB family. Homodecamer; pentamer of dimers. Requires Mg(2+) as cofactor.

The protein resides in the cytoplasm. It carries out the reaction 3-methyl-2-oxobutanoate + (6R)-5,10-methylene-5,6,7,8-tetrahydrofolate + H2O = 2-dehydropantoate + (6S)-5,6,7,8-tetrahydrofolate. It functions in the pathway cofactor biosynthesis; (R)-pantothenate biosynthesis; (R)-pantoate from 3-methyl-2-oxobutanoate: step 1/2. Catalyzes the reversible reaction in which hydroxymethyl group from 5,10-methylenetetrahydrofolate is transferred onto alpha-ketoisovalerate to form ketopantoate. This chain is 3-methyl-2-oxobutanoate hydroxymethyltransferase, found in Rippkaea orientalis (strain PCC 8801 / RF-1) (Cyanothece sp. (strain PCC 8801)).